The primary structure comprises 61 residues: MNPIILKKDGKLAEITLNRPEVHNMFSMATLTRGFAEKVVTMLEKRRRNSTEIKFLCRHAF.

This is an uncharacterized protein from Archaeoglobus fulgidus (strain ATCC 49558 / DSM 4304 / JCM 9628 / NBRC 100126 / VC-16).